A 691-amino-acid polypeptide reads, in one-letter code: DNA ligase (691 aa).

Residues 41-45, 90-91, and Glu130 contribute to the NAD(+) site; these read DAEYD and SL. Residue Lys132 is the N6-AMP-lysine intermediate of the active site. Residues Arg153, Glu190, Lys307, and Lys331 each coordinate NAD(+). Zn(2+)-binding residues include Cys425, Cys428, Cys443, and Cys449. The BRCT domain maps to 610-691; that stretch reads APQGVLAGKT…MHTLLEGHAR (82 aa).

This sequence belongs to the NAD-dependent DNA ligase family. LigA subfamily. The cofactor is Mg(2+). It depends on Mn(2+) as a cofactor.

The catalysed reaction is NAD(+) + (deoxyribonucleotide)n-3'-hydroxyl + 5'-phospho-(deoxyribonucleotide)m = (deoxyribonucleotide)n+m + AMP + beta-nicotinamide D-nucleotide.. DNA ligase that catalyzes the formation of phosphodiester linkages between 5'-phosphoryl and 3'-hydroxyl groups in double-stranded DNA using NAD as a coenzyme and as the energy source for the reaction. It is essential for DNA replication and repair of damaged DNA. The chain is DNA ligase from Burkholderia pseudomallei (strain 668).